A 422-amino-acid chain; its full sequence is Mitogen-activated protein kinase spm1 (422 aa).

Residues 21–314 form the Protein kinase domain; it reads FKVVKELGQG…VDDALEHPYL (294 aa). ATP-binding positions include 27–35 and lysine 52; that span reads LGQGAYGIV. Aspartate 149 (proton acceptor) is an active-site residue. Threonine 186 carries the phosphothreonine modification. The TXY motif lies at 186 to 188; the sequence is TEY. Tyrosine 188 carries the phosphotyrosine modification. The disordered stretch occupies residues 359 to 422; sequence RRRSHPTNPT…DHKSDDNRHN (64 aa). The span at 364–379 shows a compositional bias: polar residues; the sequence is PTNPTVNIPQPAQTVP. Residues 380–397 show a composition bias toward low complexity; the sequence is SNDNGSFNVSSSSSSQTS. Basic and acidic residues predominate over residues 411-422; sequence AIDHKSDDNRHN.

Belongs to the protein kinase superfamily. CMGC Ser/Thr protein kinase family. MAP kinase subfamily. Mg(2+) is required as a cofactor. Post-translationally, dually phosphorylated on Thr-186 and Tyr-188, which activates the enzyme.

The catalysed reaction is L-seryl-[protein] + ATP = O-phospho-L-seryl-[protein] + ADP + H(+). The enzyme catalyses L-threonyl-[protein] + ATP = O-phospho-L-threonyl-[protein] + ADP + H(+). Its activity is regulated as follows. Activated by tyrosine and threonine phosphorylation by skh1/pek1. Functionally, regulates cell integrity and functions coordinately with the protein kinase C pathway (pck1 and pck2). Involved the regulation of wall architecture, cell shape, cytokinesis in exponential and stationary phase, and metabolism of ions. The chain is Mitogen-activated protein kinase spm1 (spm1) from Schizosaccharomyces pombe (strain 972 / ATCC 24843) (Fission yeast).